A 201-amino-acid polypeptide reads, in one-letter code: Small ribosomal subunit protein uS4 (201 aa).

One can recognise an S4 RNA-binding domain in the interval 91–157; the sequence is SRLDNVIYRA…VPFQIARETV (67 aa).

It belongs to the universal ribosomal protein uS4 family. Part of the 30S ribosomal subunit. Contacts protein S5. The interaction surface between S4 and S5 is involved in control of translational fidelity.

In terms of biological role, one of the primary rRNA binding proteins, it binds directly to 16S rRNA where it nucleates assembly of the body of the 30S subunit. Its function is as follows. With S5 and S12 plays an important role in translational accuracy. The protein is Small ribosomal subunit protein uS4 of Mycobacterium leprae (strain Br4923).